The chain runs to 33 residues: Omega-conotoxin-like Vn2 (33 aa).

3 disulfides stabilise this stretch: Cys-3-Cys-20, Cys-10-Cys-24, and Cys-19-Cys-28. Pro-33 is modified (proline amide).

Expressed by the venom duct.

Its subcellular location is the secreted. Omega-conotoxins act at presynaptic membranes, they bind and block voltage-gated calcium channels (Cav). Has strong insecticidal properties at a dose of only 100 pmol/g of body weight (when injected into the haemocoel of the wax moth G.mellonella larvae). Provoques tremor and uncontrolled movements in insect larvae, that are typical symptoms caused by neurotoxins. On fish G.niger, intraperitoneal injection of the toxin causes full extension of the fins, change in posture, breathing difficulties (at 30 and 100 pmol/g body weight) and death (at 100 pmol/g body weight). The protein is Omega-conotoxin-like Vn2 of Conus ventricosus (Mediterranean cone).